Here is a 325-residue protein sequence, read N- to C-terminus: Tetraacyldisaccharide 4'-kinase (325 aa).

53-60 (SVGGNGKT) is an ATP binding site.

It belongs to the LpxK family.

It catalyses the reaction a lipid A disaccharide + ATP = a lipid IVA + ADP + H(+). It participates in glycolipid biosynthesis; lipid IV(A) biosynthesis; lipid IV(A) from (3R)-3-hydroxytetradecanoyl-[acyl-carrier-protein] and UDP-N-acetyl-alpha-D-glucosamine: step 6/6. Its function is as follows. Transfers the gamma-phosphate of ATP to the 4'-position of a tetraacyldisaccharide 1-phosphate intermediate (termed DS-1-P) to form tetraacyldisaccharide 1,4'-bis-phosphate (lipid IVA). The sequence is that of Tetraacyldisaccharide 4'-kinase from Actinobacillus succinogenes (strain ATCC 55618 / DSM 22257 / CCUG 43843 / 130Z).